The primary structure comprises 427 residues: 3-isopropylmalate dehydratase large subunit (427 aa).

[4Fe-4S] cluster is bound by residues cysteine 308, cysteine 368, and cysteine 371.

The protein belongs to the aconitase/IPM isomerase family. LeuC type 2 subfamily. In terms of assembly, heterodimer of LeuC and LeuD. The cofactor is [4Fe-4S] cluster.

The enzyme catalyses (2R,3S)-3-isopropylmalate = (2S)-2-isopropylmalate. Its pathway is amino-acid biosynthesis; L-leucine biosynthesis; L-leucine from 3-methyl-2-oxobutanoate: step 2/4. In terms of biological role, catalyzes the isomerization between 2-isopropylmalate and 3-isopropylmalate, via the formation of 2-isopropylmaleate. This chain is 3-isopropylmalate dehydratase large subunit, found in Geobacter sulfurreducens (strain ATCC 51573 / DSM 12127 / PCA).